The following is a 162-amino-acid chain: Putative 4-hydroxy-4-methyl-2-oxoglutarate aldolase (162 aa).

Substrate contacts are provided by residues 75 to 78 (GDML) and arginine 97. Position 98 (aspartate 98) interacts with a divalent metal cation.

The protein belongs to the class II aldolase/RraA-like family. Homotrimer. The cofactor is a divalent metal cation.

The catalysed reaction is 4-hydroxy-4-methyl-2-oxoglutarate = 2 pyruvate. The enzyme catalyses oxaloacetate + H(+) = pyruvate + CO2. Its function is as follows. Catalyzes the aldol cleavage of 4-hydroxy-4-methyl-2-oxoglutarate (HMG) into 2 molecules of pyruvate. Also contains a secondary oxaloacetate (OAA) decarboxylase activity due to the common pyruvate enolate transition state formed following C-C bond cleavage in the retro-aldol and decarboxylation reactions. In Pseudomonas syringae pv. tomato (strain ATCC BAA-871 / DC3000), this protein is Putative 4-hydroxy-4-methyl-2-oxoglutarate aldolase.